The primary structure comprises 523 residues: L-tyrosine:2-oxoglutarate aminotransferase ucdG (523 aa).

This sequence belongs to the class-I pyridoxal-phosphate-dependent aminotransferase family. Homodimer. Pyridoxal 5'-phosphate serves as cofactor.

The protein localises to the cytoplasm. It catalyses the reaction L-tyrosine + 2-oxoglutarate = 3-(4-hydroxyphenyl)pyruvate + L-glutamate. It participates in secondary metabolite biosynthesis. Functionally, nonribosomal peptide synthetase that mediates the biosynthesis of usterphenyllins and uscandidusins, p-terphenyl derivatives. Within the pathway, ucdG is probably involved in the conversion of L-tyrosine into 4-hydroxyphenylpyruvate (HPPA) as a precursor for the usterphenyllin and uscandidusin biosynthesis. UcdE further prenylates position C-14 of ring C of usterphenyllin B to form usterphenyllin A. The pathway begin with the biosynthesis of 4-hydroxyphenylpyruvate (HPPA) from L-tyrosine, possibly by the aminotransferase ucdG. The nonribosomal peptide synthetase ucdA then condenses two HPPA units to produce atromentin. The key step in this pathway is the reduction and dehydration of atromentin to form a terphenyl triol intermediate, performed by the NAD-dependent dehydrogenase ucdB. Further O-methylation by the methyltransferase ucdC forms terphenyllin carrying two methoxy moieties at C-9 and C-12, and subsequent dihydroxylation at C-3 of ring A and C-15 of ring C by the flavin-dependent oxygenase ucdD leads to 3,15-dihydroxyterphenyllin. Prenylation by ucdE at position C-5 of ring A forms usterphenyllin B, and is followed by a second prenylation at position C-14 of ring C to form usterphenyllin A. The following furan ring formation that leads to uscandidusins A and B was proven to be an unexpected spontaneous non-enzymatic reaction. The sequence is that of L-tyrosine:2-oxoglutarate aminotransferase ucdG from Aspergillus ustus.